Consider the following 493-residue polypeptide: Alpha-amylase-related protein (493 aa).

The signal sequence occupies residues M1 to A19. Q20 bears the Pyrrolidone carboxylic acid mark. C47 and C103 form a disulfide bridge. N117, Q168, and D177 together coordinate Ca(2+). Residues C156 and C170 are joined by a disulfide bond. R205 is a chloride binding site. Catalysis depends on D207, which acts as the Nucleophile. Position 211 (H211) interacts with Ca(2+). Catalysis depends on E244, which acts as the Proton donor. Residues N307 and R342 each coordinate chloride. 3 disulfides stabilise this stretch: C375-C381, C417-C440, and C447-C459.

Belongs to the glycosyl hydrolase 13 family. As to quaternary structure, monomer. The cofactor is Ca(2+). Requires chloride as cofactor.

It is found in the secreted. It catalyses the reaction Endohydrolysis of (1-&gt;4)-alpha-D-glucosidic linkages in polysaccharides containing three or more (1-&gt;4)-alpha-linked D-glucose units.. The protein is Alpha-amylase-related protein (Amyrel) of Drosophila orena (Fruit fly).